A 415-amino-acid chain; its full sequence is Homoserine O-acetyltransferase (415 aa).

The AB hydrolase-1 domain occupies 47–369 (NAVLVCHGLT…HGHDAFLVEP (323 aa)). Ser-155 functions as the Nucleophile in the catalytic mechanism. Arg-226 serves as a coordination point for substrate. Catalysis depends on residues Asp-329 and His-362. Residue Asp-363 participates in substrate binding. The tract at residues 383-415 (GVAGRAVTDTAPDGGEPDEDEDFAPVHSSLFSR) is disordered.

It belongs to the AB hydrolase superfamily. MetX family. Homodimer.

The protein localises to the cytoplasm. It carries out the reaction L-homoserine + acetyl-CoA = O-acetyl-L-homoserine + CoA. It participates in amino-acid biosynthesis; L-methionine biosynthesis via de novo pathway; O-acetyl-L-homoserine from L-homoserine: step 1/1. Transfers an acetyl group from acetyl-CoA to L-homoserine, forming acetyl-L-homoserine. In Haloferax volcanii (strain ATCC 29605 / DSM 3757 / JCM 8879 / NBRC 14742 / NCIMB 2012 / VKM B-1768 / DS2) (Halobacterium volcanii), this protein is Homoserine O-acetyltransferase.